A 533-amino-acid chain; its full sequence is D-2-hydroxyglutarate dehydrogenase, mitochondrial (533 aa).

A mitochondrion-targeting transit peptide spans 1–55 (MGLFQKCSRLSLRSSYMWSVCPQYSIAVTARETPDRALIVHWTQHRDVHNSRRLG). One can recognise an FAD-binding PCMH-type domain in the interval 107-286 (VQGSSDVLLR…TAVSILCPRK (180 aa)). Arg-397, Thr-401, and Lys-412 together coordinate (R)-2-hydroxyglutarate. Position 397 (Arg-397) interacts with (R)-lactate. (R)-malate-binding residues include Arg-397, Thr-401, and Lys-412. Zn(2+) contacts are provided by His-445 and His-452. A (R)-2-hydroxyglutarate-binding site is contributed by Asn-454. Zn(2+) is bound at residue Glu-486. His-487 contributes to the (R)-2-hydroxyglutarate binding site. His-487 serves as a coordination point for (R)-lactate. Position 487 (His-487) interacts with (R)-malate.

It belongs to the FAD-binding oxidoreductase/transferase type 4 family. Requires FAD as cofactor.

It is found in the mitochondrion. It carries out the reaction (R)-2-hydroxyglutarate + A = 2-oxoglutarate + AH2. The enzyme catalyses (R)-malate + A = oxaloacetate + AH2. In terms of biological role, catalyzes the oxidation of D-2-hydroxyglutarate (D-2-HG) to alpha-ketoglutarate. Also catalyzes the oxidation of other D-2-hydroxyacids, such as D-malate (D-MAL) and D-lactate (D-LAC). Exhibits high activities towards D-2-HG and D-MAL but a very weak activity towards D-LAC. This is D-2-hydroxyglutarate dehydrogenase, mitochondrial (d2hgdh) from Danio rerio (Zebrafish).